A 1066-amino-acid polypeptide reads, in one-letter code: DNA-directed RNA polymerase subunit beta (1066 aa).

This sequence belongs to the RNA polymerase beta chain family. In terms of assembly, in plastids the minimal PEP RNA polymerase catalytic core is composed of four subunits: alpha, beta, beta', and beta''. When a (nuclear-encoded) sigma factor is associated with the core the holoenzyme is formed, which can initiate transcription.

It is found in the plastid. The protein resides in the chloroplast. It catalyses the reaction RNA(n) + a ribonucleoside 5'-triphosphate = RNA(n+1) + diphosphate. Functionally, DNA-dependent RNA polymerase catalyzes the transcription of DNA into RNA using the four ribonucleoside triphosphates as substrates. The polypeptide is DNA-directed RNA polymerase subunit beta (Coffea arabica (Arabian coffee)).